Reading from the N-terminus, the 119-residue chain is Large ribosomal subunit protein uL18 (119 aa).

The protein belongs to the universal ribosomal protein uL18 family. In terms of assembly, part of the 50S ribosomal subunit; part of the 5S rRNA/L5/L18/L25 subcomplex. Contacts the 5S and 23S rRNAs.

This is one of the proteins that bind and probably mediate the attachment of the 5S RNA into the large ribosomal subunit, where it forms part of the central protuberance. The sequence is that of Large ribosomal subunit protein uL18 from Nitratidesulfovibrio vulgaris (strain DP4) (Desulfovibrio vulgaris).